The chain runs to 84 residues: Polcalcin Ole e 3 (84 aa).

EF-hand domains lie at 6 to 40 and 41 to 76; these read QEVA…TLGS and VTPE…NRGL. The Ca(2+) site is built by D19, N21, D23, K25, E30, D54, D56, D58, and E65.

Expressed exclusively in mature pollen.

It is found in the endomembrane system. The chain is Polcalcin Ole e 3 (OLE3) from Olea europaea (Common olive).